Reading from the N-terminus, the 302-residue chain is Transmembrane protein 191C (302 aa).

Disordered regions lie at residues 1–21 and 54–73; these read MAAT…GRQR and LRRR…EAAR. Positions 5-160 form a coiled coil; the sequence is QELLLQLQKD…EKLQQDALQT (156 aa). The chain crosses the membrane as a helical span at residues 238-258; that stretch reads VLGALQVLLTLPLLFLGLSLL.

The protein belongs to the TMEM191 family.

Its subcellular location is the membrane. This chain is Transmembrane protein 191C, found in Homo sapiens (Human).